We begin with the raw amino-acid sequence, 482 residues long: [Fructose-bisphosphate aldolase]-lysine N-methyltransferase, chloroplastic (482 aa).

The N-terminal 57 residues, 1–57 (MSASVAVVSGFLRIPSIQKSQNPSFLFSRPKKSLVRPISASSSELPENVRNFWKWLR), are a transit peptide targeting the chloroplast. One can recognise an SET domain in the interval 59 to 282 (QGVVSGKSVA…AGEQVYIQYD (224 aa)). Residues 75–77 (EGL) and arginine 217 each bind S-adenosyl-L-methionine. Residues arginine 217, arginine 221, and aspartate 234 each contribute to the substrate site. 237 to 238 (NH) contributes to the S-adenosyl-L-methionine binding site. 3 residues coordinate substrate: tyrosine 249, tyrosine 281, and tyrosine 294.

The protein belongs to the class V-like SAM-binding methyltransferase superfamily. Plant protein-lysine LSMT methyltransferase family.

It localises to the plastid. The protein resides in the chloroplast stroma. It carries out the reaction [fructose-bisphosphate aldolase]-L-lysine + 3 S-adenosyl-L-methionine = [fructose-bisphosphate aldolase]-N(6),N(6),N(6)-trimethyl-L-lysine + 3 S-adenosyl-L-homocysteine + 3 H(+). Its function is as follows. Protein-lysine methyltransferase methylating chloroplastic fructose 1,6-bisphosphate aldolases. Can also use with low efficiency gamma-tocopherol methyltransferase as substrate, but not a cytosolic aldolase. Able to interact with unmethylated Rubisco, but unlike in pea, the complex is catalytically unproductive. The protein is [Fructose-bisphosphate aldolase]-lysine N-methyltransferase, chloroplastic (LSMT-L) of Arabidopsis thaliana (Mouse-ear cress).